A 677-amino-acid polypeptide reads, in one-letter code: WD repeat-containing protein 48 (677 aa).

8 WD repeats span residues 28–67 (YNRN…QDPY), 73–112 (HHTD…CMST), 115–154 (THKD…ALTA), 166–205 (GNKD…KLMK), 208–247 (GHTD…CIAT), 250–289 (VHDE…MRVL), 292–334 (EEKA…NFRA), and 358–397 (KGGT…KGED). Positions 611–632 (SQATSSSANDKPGEQEKEEDVS) are disordered.

It belongs to the WD repeat WDR48 family.

The protein localises to the nucleus. The protein resides in the cytoplasm. It localises to the lysosome. Its subcellular location is the late endosome. Functionally, regulator of deubiquitinating complexes, which acts as a strong activator of usp1, usp12 and usp46. Enhances the usp1-mediated deubiquitination of fancd2; usp1 being almost inactive by itself. Activates deubiquitination by increasing the catalytic turnover without increasing the affinity of deubiquitinating enzymes for the substrate. Also activates deubiquitinating activity of complexes containing usp12. Together with rad51ap1, promotes DNA repair by stimulating rad51-mediated homologous recombination. Binds single-stranded DNA (ssDNA) and double-stranded DNA (dsDNA). DNA-binding is required both for usp1-mediated deubiquitination of fancd2 and stimulation of rad51-mediated homologous recombination: both wdr48/uaf1 and rad51ap1 have coordinated role in DNA-binding during these processes. Together with atad5 and by regulating usp1 activity, has a role in pcna-mediated translesion synthesis (TLS) by deubiquitinating monoubiquitinated pcna. Together with atad5, has a role in recruiting rad51 to stalled forks during replication stress. This Danio rerio (Zebrafish) protein is WD repeat-containing protein 48 (wdr48).